We begin with the raw amino-acid sequence, 476 residues long: tRNA sulfurtransferase (476 aa).

The 103-residue stretch at 54-156 (AENDIPLSKV…GKDALIYDKI (103 aa)) folds into the THUMP domain. ATP is bound by residues 174–175 (MV), Lys-256, Gly-278, and Gln-287. Cys-334 and Cys-433 form a disulfide bridge. The Rhodanese domain maps to 388–470 (NLEDAVFIDL…LSKQKGSVDE (83 aa)). Cys-433 acts as the Cysteine persulfide intermediate in catalysis.

It belongs to the ThiI family.

The protein localises to the cytoplasm. The enzyme catalyses [ThiI sulfur-carrier protein]-S-sulfanyl-L-cysteine + a uridine in tRNA + 2 reduced [2Fe-2S]-[ferredoxin] + ATP + H(+) = [ThiI sulfur-carrier protein]-L-cysteine + a 4-thiouridine in tRNA + 2 oxidized [2Fe-2S]-[ferredoxin] + AMP + diphosphate. The catalysed reaction is [ThiS sulfur-carrier protein]-C-terminal Gly-Gly-AMP + S-sulfanyl-L-cysteinyl-[cysteine desulfurase] + AH2 = [ThiS sulfur-carrier protein]-C-terminal-Gly-aminoethanethioate + L-cysteinyl-[cysteine desulfurase] + A + AMP + 2 H(+). It participates in cofactor biosynthesis; thiamine diphosphate biosynthesis. In terms of biological role, catalyzes the ATP-dependent transfer of a sulfur to tRNA to produce 4-thiouridine in position 8 of tRNAs, which functions as a near-UV photosensor. Also catalyzes the transfer of sulfur to the sulfur carrier protein ThiS, forming ThiS-thiocarboxylate. This is a step in the synthesis of thiazole, in the thiamine biosynthesis pathway. The sulfur is donated as persulfide by IscS. The chain is tRNA sulfurtransferase from Thermoplasma volcanium (strain ATCC 51530 / DSM 4299 / JCM 9571 / NBRC 15438 / GSS1).